A 580-amino-acid polypeptide reads, in one-letter code: MKEQLEQLLAEAIGQLKAQGTIPADHSVNIQLDRPRDKSHGDFATNLALMLAKPAKSNPRQLAEAIVAAVPENSLLSKMDIAGPGFINFTISQDQLKDQLTAMLNSDSLNVDVAEESKTIVIDYSSPNLAKEMHVGHLRSAIIGDAVSRVCEFLGHKVIRQNHVGDWGTQFGMLLAYMEALDNQSAEYELSNLETFYKAAKQRFDESEEFADRARQLVVKLQSGDEYCLKLWNQFIDVSLSHCQDVYDRLGVKLTRDDVMAESAYNDKLPGVIEHLREKGLLTEDQGAQCVFLEEYKGKEGEPLPIIVQKKGGGYLYATTDLAAIEYRQKELGGDHLMYFVDARQALHFDQIFTLARKAGFVEGDIQLNHYGFGTVMGKDGKPYKSRDGGVTKLADLLDEAERRALELLQQKTTDLSEEQQKRVAEVVGISSVKYADLSKNRTSDYVFDWNHMLTFEGNTAPYLLYAFTRVNSIFDRLGDTAFDRNADIILSDERELALANQLVRFNEVLHQVQDKAMPHFLCGFLFDLAGRFSSFYEACPILNQEDEALRNSRLKLSMLTANVLKQGLELLGIPTLEKM.

The short motif at 127 to 137 (PNLAKEMHVGH) is the 'HIGH' region element.

This sequence belongs to the class-I aminoacyl-tRNA synthetase family. As to quaternary structure, monomer.

It localises to the cytoplasm. The enzyme catalyses tRNA(Arg) + L-arginine + ATP = L-arginyl-tRNA(Arg) + AMP + diphosphate. In Idiomarina loihiensis (strain ATCC BAA-735 / DSM 15497 / L2-TR), this protein is Arginine--tRNA ligase.